A 221-amino-acid chain; its full sequence is NEDD4 family-interacting protein 1 (221 aa).

A2 is subject to N-acetylalanine. Residues 2–41 form an interaction with UBE2L3 region; it reads ALALAALAAVEPACGTGYQQLQNEEEPGEREQTAGDAPPP. Over 2-116 the chain is Cytoplasmic; that stretch reads ALALAALAAV…ADQLRIGNDG (115 aa). A disordered region spans residues 15–45; that stretch reads CGTGYQQLQNEEEPGEREQTAGDAPPPYSSI. Short sequence motifs (PPxY motif) lie at residues 39–42, 64–67, and 74–76; these read PPPY, PPSY, and PSY. The segment at 42-76 is interaction with ITCH; the sequence is YSSISAESAAYFDYKDESGFPKPPSYNVATTLPSY. The helical transmembrane segment at 117–137 threads the bilayer; it reads IFMLTFFMAFLFNWIGFFLSF. At 138-143 the chain is on the extracellular side; the sequence is CLTTSA. Residues 144–164 traverse the membrane as a helical segment; the sequence is AGRYGAISGFGLSLIKWILIV. The Cytoplasmic portion of the chain corresponds to 165 to 172; the sequence is RFSTYFPG. A helical membrane pass occupies residues 173 to 193; it reads YFDGQYWLWWVFLVLGFLLFL. The Extracellular segment spans residues 194 to 221; sequence RGFINYAKVRKMPETFSNLPRTRVLFIY.

In terms of assembly, forms heterodimers with NDFIP2. Interacts with several E3 ubiquitin-protein ligases, including ITCH, NEDD4, NEDD4L and WWP2. The interaction with NEDD4, NEDD4L and ITCH leads to relocalization of these proteins to exosomes and eventually to exosomal secretion. Interacts with SR1402. Interacts with SLC11A2/DMT1. Interacts with PTEN. May interact with phosphorylated EGFR. Interacts with BRAT1. Interacts with KCNH2. Interacts with MAVS. Part of a complex containing ITCH, NDFIP1 and MAP3K7. Interacts (via N-terminus) with UBE2L3; the interaction mediates recruitment of UBE2L3 to ITCH. Ubiquitinated by NEDD4; mono-, di- and polyubiquitinated forms are detected. Ubiquitination regulates its degradation. Post-translationally, undergoes transient tyrosine phosphorylation following EGF stimulation, most probably by catalyzed by SRC. Phosphorylation SRC is enhanced in the presence of NDFIP2 which may act as a scaffold to recruit SRC to NDFIP1.

It is found in the endosome membrane. The protein resides in the golgi apparatus membrane. Its subcellular location is the synapse. It localises to the synaptosome. The protein localises to the cell projection. It is found in the dendrite. The protein resides in the secreted. Functionally, activates HECT domain-containing E3 ubiquitin-protein ligases, including NEDD4 and ITCH, and consequently modulates the stability of their targets. As a result, controls many cellular processes. Prevents chronic T-helper cell-mediated inflammation by activating ITCH and thus controlling JUNB degradation. Promotes pancreatic beta cell death through degradation of JUNB and inhibition of the unfolded protein response, leading to reduction of insulin secretion. Restricts the production of pro-inflammatory cytokines in effector Th17 T-cells by promoting ITCH-mediated ubiquitination degradation of RORC. Together with NDFIP2, limits the cytokine signaling and expansion of effector Th2 T-cells by promoting degradation of JAK1, probably by ITCH- and NEDD4L-mediated ubiquitination. Regulates peripheral T-cell tolerance to self and foreign antigens, forcing the exit of naive CD4+ T-cells from the cell cycle before they become effector T-cells. Negatively regulates RLR-mediated antiviral response by promoting SMURF1-mediated ubiquitination and subsequent degradation of MAVS. Negatively regulates KCNH2 potassium channel activity by decreasing its cell-surface expression and interfering with channel maturation through recruitment of NEDD4L to the Golgi apparatus where it mediates KCNH2 degradation. In cortical neurons, mediates the ubiquitination of the divalent metal transporter SLC11A2/DMT1 by NEDD4L, leading to its down-regulation and protection of the cells from cobalt and iron toxicity. Important for normal development of dendrites and dendritic spines in cortex. Enhances the ubiquitination of BRAT1 mediated by: NEDD4, NEDD4L and ITCH and is required for the nuclear localization of ubiquitinated BRAT1. Enhances the ITCH-mediated ubiquitination of MAP3K7 by recruiting E2 ubiquitin-conjugating enzyme UBE2L3 to ITCH. Modulates EGFR signaling through multiple pathways. In particular, may regulate the ratio of AKT1-to-MAPK8 signaling in response to EGF, acting on AKT1 probably through PTEN destabilization and on MAPK8 through ITCH-dependent MAP2K4 inactivation. As a result, may control cell growth rate. Inhibits cell proliferation by promoting PTEN nuclear localization and changing its signaling specificity. This chain is NEDD4 family-interacting protein 1 (Ndfip1), found in Rattus norvegicus (Rat).